The following is a 729-amino-acid chain: U-box domain-containing protein 17 (729 aa).

A U-box domain is found at 304-378 (TVPKDFVCPI…VQWCTASGIS (75 aa)). ARM repeat units follow at residues 438-477 (KENR…NLSI), 479-520 (EKNK…SLSA), 523-562 (EYKK…NLST), and 564-601 (PDNC…LLVR).

The catalysed reaction is S-ubiquitinyl-[E2 ubiquitin-conjugating enzyme]-L-cysteine + [acceptor protein]-L-lysine = [E2 ubiquitin-conjugating enzyme]-L-cysteine + N(6)-ubiquitinyl-[acceptor protein]-L-lysine.. Its pathway is protein modification; protein ubiquitination. In terms of biological role, functions as an E3 ubiquitin ligase. The protein is U-box domain-containing protein 17 (PUB17) of Arabidopsis thaliana (Mouse-ear cress).